We begin with the raw amino-acid sequence, 339 residues long: Methylthioribose-1-phosphate isomerase (339 aa).

Residues 52–54, Arg89, and Gln188 each bind substrate; that span reads RGA. Asp229 functions as the Proton donor in the catalytic mechanism. 239–240 contributes to the substrate binding site; sequence NK.

This sequence belongs to the eIF-2B alpha/beta/delta subunits family. MtnA subfamily.

The catalysed reaction is 5-(methylsulfanyl)-alpha-D-ribose 1-phosphate = 5-(methylsulfanyl)-D-ribulose 1-phosphate. The protein operates within amino-acid biosynthesis; L-methionine biosynthesis via salvage pathway; L-methionine from S-methyl-5-thio-alpha-D-ribose 1-phosphate: step 1/6. Its function is as follows. Catalyzes the interconversion of methylthioribose-1-phosphate (MTR-1-P) into methylthioribulose-1-phosphate (MTRu-1-P). The polypeptide is Methylthioribose-1-phosphate isomerase (Anaeromyxobacter sp. (strain K)).